The chain runs to 208 residues: Uracil phosphoribosyltransferase (208 aa).

5-phospho-alpha-D-ribose 1-diphosphate is bound by residues R78, R103, and 130 to 138 (DPMLATGGS). Uracil contacts are provided by residues I193 and 198-200 (GDA). D199 provides a ligand contact to 5-phospho-alpha-D-ribose 1-diphosphate.

It belongs to the UPRTase family. It depends on Mg(2+) as a cofactor.

It catalyses the reaction UMP + diphosphate = 5-phospho-alpha-D-ribose 1-diphosphate + uracil. Its pathway is pyrimidine metabolism; UMP biosynthesis via salvage pathway; UMP from uracil: step 1/1. Its activity is regulated as follows. Allosterically activated by GTP. Its function is as follows. Catalyzes the conversion of uracil and 5-phospho-alpha-D-ribose 1-diphosphate (PRPP) to UMP and diphosphate. This is Uracil phosphoribosyltransferase from Shewanella denitrificans (strain OS217 / ATCC BAA-1090 / DSM 15013).